The sequence spans 487 residues: 6-phosphogluconate dehydrogenase, decarboxylating 1, chloroplastic (487 aa).

The residue at position 1 (methionine 1) is an N-acetylmethionine. Residues 13 to 18, 36 to 38, 80 to 82, and asparagine 108 each bind NADP(+); these read GLAVMG, NRT, and VKA. Residues asparagine 108 and 134–136 contribute to the substrate site; that span reads SGG. The Proton acceptor role is filled by lysine 188. 191–192 lines the substrate pocket; sequence HN. The active-site Proton donor is glutamate 195. The substrate site is built by tyrosine 196, lysine 266, arginine 293, arginine 458, and histidine 464.

The protein belongs to the 6-phosphogluconate dehydrogenase family. Forms homodimer. Forms heterodimers with PGD2 or PGD3.

The protein resides in the plastid. It is found in the chloroplast. The protein localises to the cytoplasm. Its subcellular location is the cytosol. It catalyses the reaction 6-phospho-D-gluconate + NADP(+) = D-ribulose 5-phosphate + CO2 + NADPH. It functions in the pathway carbohydrate degradation; pentose phosphate pathway; D-ribulose 5-phosphate from D-glucose 6-phosphate (oxidative stage): step 3/3. Functionally, catalyzes the oxidative decarboxylation of 6-phosphogluconate to ribulose 5-phosphate and CO(2), with concomitant reduction of NADP to NADPH. The sequence is that of 6-phosphogluconate dehydrogenase, decarboxylating 1, chloroplastic from Arabidopsis thaliana (Mouse-ear cress).